A 179-amino-acid chain; its full sequence is MIIYLHGFDSTSPGNHEKVLQLQFIDDDVRFINYSTLHPKHDMQHLLKEVSKVIDQSDDPNPLICGVGLGGYWSERIGFLCGIKQVMFNPNLHPENTMAGRIDRPEEYEDIATKCVDQFRAKNQGRCLVILSKEDEIHDNTKTASELEKHYDIIWDESQSHKFKKISQHLQAMKEFKNT.

This sequence belongs to the UPF0227 family.

This is UPF0227 protein VP0969 from Vibrio parahaemolyticus serotype O3:K6 (strain RIMD 2210633).